The primary structure comprises 138 residues: Large ribosomal subunit protein bL17 (138 aa).

This sequence belongs to the bacterial ribosomal protein bL17 family. As to quaternary structure, part of the 50S ribosomal subunit. Contacts protein L32.

This Nitrobacter winogradskyi (strain ATCC 25391 / DSM 10237 / CIP 104748 / NCIMB 11846 / Nb-255) protein is Large ribosomal subunit protein bL17.